The sequence spans 246 residues: Caffeoyl-CoA O-methyltransferase 1 (246 aa).

Lys-21 lines the substrate pocket. Residues Thr-63, Glu-85, 87 to 88 (GV), Ser-93, Asp-111, and Ala-140 each bind S-adenosyl-L-methionine. Asp-162 provides a ligand contact to substrate. Asp-162 provides a ligand contact to a divalent metal cation. Asp-164 is an S-adenosyl-L-methionine binding site. Asp-188 and Asn-189 together coordinate a divalent metal cation. Residue Asn-193 coordinates substrate.

Belongs to the class I-like SAM-binding methyltransferase superfamily. Cation-dependent O-methyltransferase family. CCoAMT subfamily. A divalent metal cation is required as a cofactor.

It catalyses the reaction (E)-caffeoyl-CoA + S-adenosyl-L-methionine = (E)-feruloyl-CoA + S-adenosyl-L-homocysteine + H(+). It functions in the pathway aromatic compound metabolism; phenylpropanoid biosynthesis. Its function is as follows. Methylates caffeoyl-CoA to feruloyl-CoA and 5-hydroxyferuloyl-CoA to sinapoyl-CoA. Plays a role in the synthesis of feruloylated polysaccharides. Involved in the reinforcement of the plant cell wall. Also involved in the responding to wounding or pathogen challenge by the increased formation of cell wall-bound ferulic acid polymers. The protein is Caffeoyl-CoA O-methyltransferase 1 (CCOMT) of Eucalyptus globulus (Tasmanian blue gum).